Consider the following 1066-residue polypeptide: Ubiquitin conjugation factor E4 A (1066 aa).

Residues 33-57 (KEQLKQQSDELPASPDDSDNSVSES) are disordered. Position 386 is an N6-acetyllysine (Lys-386). Residues 987-1061 (DACDEFLDPI…QRWLAERKQQ (75 aa)) form the U-box domain.

It belongs to the ubiquitin conjugation factor E4 family.

It is found in the cytoplasm. It catalyses the reaction S-ubiquitinyl-[E2 ubiquitin-conjugating enzyme]-L-cysteine + [acceptor protein]-L-lysine = [E2 ubiquitin-conjugating enzyme]-L-cysteine + N(6)-ubiquitinyl-[acceptor protein]-L-lysine.. The protein operates within protein modification; protein ubiquitination. In terms of biological role, ubiquitin-protein ligase that probably functions as an E3 ligase in conjunction with specific E1 and E2 ligases. May also function as an E4 ligase mediating the assembly of polyubiquitin chains on substrates ubiquitinated by another E3 ubiquitin ligase. Mediates 'Lys-48'-linked polyubiquitination of substrates. The sequence is that of Ubiquitin conjugation factor E4 A from Pongo abelii (Sumatran orangutan).